The following is a 1025-amino-acid chain: Exportin-T (1025 aa).

This sequence belongs to the exportin family.

It is found in the nucleus. It localises to the cytoplasm. TRNA nucleus export receptor which facilitates tRNA translocation across the nuclear pore complex. Involved in pre-tRNA splicing, probably by affecting the interaction of pre-tRNA with splicing endonuclease. In Yarrowia lipolytica (strain CLIB 122 / E 150) (Yeast), this protein is Exportin-T (LOS1).